A 509-amino-acid chain; its full sequence is Cytochrome P450 monooxygenase hepC (509 aa).

The helical transmembrane segment at Met5–Val25 threads the bilayer. Cys454 is a heme binding site. A glycan (N-linked (GlcNAc...) asparagine) is linked at Asn491.

It belongs to the cytochrome P450 family. Heme is required as a cofactor.

It is found in the membrane. The protein operates within secondary metabolite biosynthesis. Functionally, cytochrome P450 monooxygenase; part of the gene cluster that mediates the biosynthesis of heptelidic acid (HA), a sesquiterpene lactone that acts as an inhibitor of glyceraldehyde-3-phosphatedehydrogenase (GAPDH) and a growth inhibitor of the salt-tolerant lactic acid bacteria in soy sauce brewing. The polypeptide is Cytochrome P450 monooxygenase hepC (Aspergillus oryzae (strain ATCC 42149 / RIB 40) (Yellow koji mold)).